The chain runs to 523 residues: NAD(P)H-quinone oxidoreductase subunit 2 (523 aa).

The next 13 membrane-spanning stretches (helical) occupy residues 29–49, 57–77, 94–114, 132–152, 182–202, 221–241, 255–275, 291–311, 317–337, 345–365, 389–409, 424–444, and 477–497; these read AVLPEGAVLLAMIATLLVDLA, WVPPICYIGLGSALVLLALQW, LAVAFRAVIATSTLLSLLISW, LAATLGAMLLCGATDLVSIFI, LLVGSAAAAVFLYGASLLYGL, PIAALSLVFVLATVAFKIAAV, PTPVVAFLSVGSKAAGFALAL, LLFTVLAVLSMTLGNVVALAQ, MLAYSSIGQAGFVMIGMVCGT, VLYMAAYLFMNLGAFACIILF, LGLSLCLLSLGGIPPMLGFFG, LLVVVGLITSVISIYYYISVI, and VALIGCVGVTAIGGILSNPLF.

Belongs to the complex I subunit 2 family. In terms of assembly, NDH-1 can be composed of about 15 different subunits; different subcomplexes with different compositions have been identified which probably have different functions.

Its subcellular location is the cellular thylakoid membrane. The catalysed reaction is a plastoquinone + NADH + (n+1) H(+)(in) = a plastoquinol + NAD(+) + n H(+)(out). It carries out the reaction a plastoquinone + NADPH + (n+1) H(+)(in) = a plastoquinol + NADP(+) + n H(+)(out). NDH-1 shuttles electrons from an unknown electron donor, via FMN and iron-sulfur (Fe-S) centers, to quinones in the respiratory and/or the photosynthetic chain. The immediate electron acceptor for the enzyme in this species is believed to be plastoquinone. Couples the redox reaction to proton translocation, and thus conserves the redox energy in a proton gradient. Cyanobacterial NDH-1 also plays a role in inorganic carbon-concentration. The chain is NAD(P)H-quinone oxidoreductase subunit 2 from Synechococcus sp. (strain CC9902).